The following is a 901-amino-acid chain: Envelope glycoprotein B (901 aa).

Positions 1-34 (MRPVRGIARSRILSCSWRGTWTSALTILYLGVYC) are cleaved as a signal peptide. The Virion surface portion of the chain corresponds to 35–736 (ESTTVTPTTV…GALVTFVTNP (702 aa)). 3 N-linked (GlcNAc...) asparagine; by host glycosylation sites follow: N53, N60, and N66. Disulfide bonds link C84-C533, C101-C489, C174-C239, and C331-C380. Residues 141-147 (SYKYVTY) are involved in fusion and/or binding to host membrane. The N-linked (GlcNAc...) asparagine; by host glycan is linked to N197. The segment at 226 to 233 (GSVWLYKE) is involved in fusion and/or binding to host membrane. 10 N-linked (GlcNAc...) asparagine; by host glycosylation sites follow: N270, N289, N328, N372, N398, N406, N436, N537, N571, and N623. C559 and C596 are joined by a disulfide. Hydrophobic membrane proximal region regions lie at residues 683–734 (VERV…TFVT) and 714–734 (AVGAVGGAIGSFIGALVTFVT). A helical membrane pass occupies residues 737 to 757 (FGAFVVFLFCVGCITLVITVY). Residues 758–901 (RRQRRAMQRP…KLNTEDDVHV (144 aa)) are Intravirion-facing. Disordered regions lie at residues 794–813 (GPEGTSGDAPPPYPGEAPYG) and 852–901 (DDKK…DVHV). 2 stretches are compositionally biased toward basic and acidic residues: residues 852–864 (DDKKRQEIEKSSK) and 872–883 (SETRRRPGIMDR). Residues 890–893 (YQKL) carry the Internalization motif motif.

This sequence belongs to the herpesviridae glycoprotein B family. As to quaternary structure, homotrimer; disulfide-linked. Binds to heparan sulfate proteoglycans. Interacts with gH/gL heterodimer. Post-translationally, a proteolytic cleavage by host furin generates two subunits that remain linked by disulfide bonds.

It is found in the virion membrane. The protein localises to the host cell membrane. The protein resides in the host endosome membrane. It localises to the host Golgi apparatus membrane. In terms of biological role, envelope glycoprotein that forms spikes at the surface of virion envelope. Essential for the initial attachment to heparan sulfate moieties of the host cell surface proteoglycans. Involved in fusion of viral and cellular membranes leading to virus entry into the host cell. Following initial binding to its host receptors, membrane fusion is mediated by the fusion machinery composed at least of gB and the heterodimer gH/gL. May be involved in the fusion between the virion envelope and the outer nuclear membrane during virion egress. This Guinea pig cytomegalovirus (strain 22122) (GPCMV) protein is Envelope glycoprotein B.